Reading from the N-terminus, the 692-residue chain is Elongation factor G (692 aa).

Residues 8-282 (EKTRNIGIMA…AVLDYLPAPT (275 aa)) form the tr-type G domain. GTP is bound by residues 17-24 (AHIDAGKT), 81-85 (DTPGH), and 135-138 (NKMD).

It belongs to the TRAFAC class translation factor GTPase superfamily. Classic translation factor GTPase family. EF-G/EF-2 subfamily.

The protein localises to the cytoplasm. In terms of biological role, catalyzes the GTP-dependent ribosomal translocation step during translation elongation. During this step, the ribosome changes from the pre-translocational (PRE) to the post-translocational (POST) state as the newly formed A-site-bound peptidyl-tRNA and P-site-bound deacylated tRNA move to the P and E sites, respectively. Catalyzes the coordinated movement of the two tRNA molecules, the mRNA and conformational changes in the ribosome. The polypeptide is Elongation factor G (Bacillus licheniformis (strain ATCC 14580 / DSM 13 / JCM 2505 / CCUG 7422 / NBRC 12200 / NCIMB 9375 / NCTC 10341 / NRRL NRS-1264 / Gibson 46)).